The chain runs to 267 residues: Diphthine--ammonia ligase (267 aa).

At tyrosine 97 the chain carries Phosphotyrosine.

It belongs to the Diphthine--ammonia ligase family.

The enzyme catalyses diphthine-[translation elongation factor 2] + NH4(+) + ATP = diphthamide-[translation elongation factor 2] + AMP + diphosphate + H(+). It participates in protein modification; peptidyl-diphthamide biosynthesis. Amidase that may catalyze the last step of diphthamide biosynthesis using ammonium and ATP. Diphthamide biosynthesis consists in the conversion of an L-histidine residue in the translation elongation factor (EEF2) to diphthamide. This Homo sapiens (Human) protein is Diphthine--ammonia ligase.